Here is a 478-residue protein sequence, read N- to C-terminus: MKVTLPDFRQAGVLVVGDVMLDRYWYGPTSRISPEAPVPVVKVDTIEERPGGAANVAMNIAALGAGSRLVGLTGVDDAARALNAKLGEVNVKCDFVSVPTHPTITKLRVLSRNQQLIRLDFEEGFEGIDPQPIIERIQQALPEIGALVLSDYAKGALAHVQTMIQTAKAAGVPVLIDPKGTDFSRYRGATLLTPNLSEFEAVAGRSKTEEELVERGMQLVADYELSALLITRSEQGMTLLQPGKAPLHLPTLAQEVYDVTGAGDTVIGVLAAALAAGNSLEEACFLANAAAGVVVGKLGTSTVTPIELENAIRGRADTGFGVMTEEQLKHAVELARQRGEKIVMTNGCFDILHAGHVSYLANARKLGDRLIVAVNSDASTKRLKGPTRPVNPLPQRMIVLGALEAVDWVVPFEEDTPQRLIASILPDILVKGGDYQPHEIAGSEEVWANGGEVKVLNFEDGCSTTNIINMIKASTSQS.

A ribokinase region spans residues 1 to 318 (MKVTLPDFRQ…ENAIRGRADT (318 aa)). 195–198 (NLSE) contacts ATP. Aspartate 264 is an active-site residue. Residues 344–478 (MTNGCFDILH…NMIKASTSQS (135 aa)) are cytidylyltransferase.

This sequence in the N-terminal section; belongs to the carbohydrate kinase PfkB family. The protein in the C-terminal section; belongs to the cytidylyltransferase family. Homodimer.

It carries out the reaction D-glycero-beta-D-manno-heptose 7-phosphate + ATP = D-glycero-beta-D-manno-heptose 1,7-bisphosphate + ADP + H(+). It catalyses the reaction D-glycero-beta-D-manno-heptose 1-phosphate + ATP + H(+) = ADP-D-glycero-beta-D-manno-heptose + diphosphate. It participates in nucleotide-sugar biosynthesis; ADP-L-glycero-beta-D-manno-heptose biosynthesis; ADP-L-glycero-beta-D-manno-heptose from D-glycero-beta-D-manno-heptose 7-phosphate: step 1/4. It functions in the pathway nucleotide-sugar biosynthesis; ADP-L-glycero-beta-D-manno-heptose biosynthesis; ADP-L-glycero-beta-D-manno-heptose from D-glycero-beta-D-manno-heptose 7-phosphate: step 3/4. Its function is as follows. Catalyzes the phosphorylation of D-glycero-D-manno-heptose 7-phosphate at the C-1 position to selectively form D-glycero-beta-D-manno-heptose-1,7-bisphosphate. Catalyzes the ADP transfer from ATP to D-glycero-beta-D-manno-heptose 1-phosphate, yielding ADP-D-glycero-beta-D-manno-heptose. This is Bifunctional protein HldE from Pectobacterium atrosepticum (strain SCRI 1043 / ATCC BAA-672) (Erwinia carotovora subsp. atroseptica).